The primary structure comprises 747 residues: Eukaryotic translation initiation factor 3 subunit B (747 aa).

An RRM domain is found at 42-128 (AFVVVDGLPE…HTLRVNKLTD (87 aa)). WD repeat units lie at residues 195-234 (DRQHWTETFVQWSPLGTYLTSVHAQGVQLWGGPSWTRQRR), 236-292 (AHPF…PLRS), 310-349 (APKFPWPAFKWSADDKYVARLNPGQSISVYELPRMNLLDK), 520-563 (LEKK…EKPE), and 578-623 (ADHY…LREE).

This sequence belongs to the eIF-3 subunit B family. Component of the eukaryotic translation initiation factor 3 (eIF-3) complex.

It localises to the cytoplasm. Functionally, RNA-binding component of the eukaryotic translation initiation factor 3 (eIF-3) complex, which is involved in protein synthesis of a specialized repertoire of mRNAs and, together with other initiation factors, stimulates binding of mRNA and methionyl-tRNAi to the 40S ribosome. The eIF-3 complex specifically targets and initiates translation of a subset of mRNAs involved in cell proliferation. The protein is Eukaryotic translation initiation factor 3 subunit B (prt-1) of Neurospora crassa (strain ATCC 24698 / 74-OR23-1A / CBS 708.71 / DSM 1257 / FGSC 987).